A 335-amino-acid chain; its full sequence is Ketol-acid reductoisomerase (NAD(P)(+)) (335 aa).

The region spanning 5-185 (AKIYTDKDTT…GGTRAGAIET (181 aa)) is the KARI N-terminal Rossmann domain. Residues 28-31 (YGSQ), R52, S56, and 86-89 (DMAQ) contribute to the NADP(+) site. H111 is an active-site residue. Position 137 (G137) interacts with NADP(+). Residues 186–331 (TFKEETETDL…RRLKEIIERG (146 aa)) form the KARI C-terminal knotted domain. D194, E198, E230, and E234 together coordinate Mg(2+). A substrate-binding site is contributed by S255. Residues 301-335 (GSPTLSKGLEEMDKSLEEQTGRRLKEIIERGRPKS) are disordered. The span at 308–335 (GLEEMDKSLEEQTGRRLKEIIERGRPKS) shows a compositional bias: basic and acidic residues.

This sequence belongs to the ketol-acid reductoisomerase family. Requires Mg(2+) as cofactor.

The enzyme catalyses (2R)-2,3-dihydroxy-3-methylbutanoate + NAD(+) = (2S)-2-acetolactate + NADH + H(+). It catalyses the reaction (2R)-2,3-dihydroxy-3-methylbutanoate + NADP(+) = (2S)-2-acetolactate + NADPH + H(+). Its pathway is amino-acid biosynthesis; L-isoleucine biosynthesis; L-isoleucine from 2-oxobutanoate: step 2/4. The protein operates within amino-acid biosynthesis; L-valine biosynthesis; L-valine from pyruvate: step 2/4. Involved in the biosynthesis of branched-chain amino acids (BCAA). Catalyzes an alkyl-migration followed by a ketol-acid reduction of (S)-2-acetolactate (S2AL) to yield (R)-2,3-dihydroxy-isovalerate. In the isomerase reaction, S2AL is rearranged via a Mg-dependent methyl migration to produce 3-hydroxy-3-methyl-2-ketobutyrate (HMKB). In the reductase reaction, this 2-ketoacid undergoes a metal-dependent reduction by NADPH or NADH to yield (R)-2,3-dihydroxy-isovalerate. The polypeptide is Ketol-acid reductoisomerase (NAD(P)(+)) (Metallosphaera sedula (strain ATCC 51363 / DSM 5348 / JCM 9185 / NBRC 15509 / TH2)).